A 132-amino-acid polypeptide reads, in one-letter code: Small ribosomal subunit protein uS8c (132 aa).

The protein belongs to the universal ribosomal protein uS8 family. As to quaternary structure, part of the 30S ribosomal subunit.

It localises to the plastid. The protein resides in the chloroplast. Functionally, one of the primary rRNA binding proteins, it binds directly to 16S rRNA central domain where it helps coordinate assembly of the platform of the 30S subunit. This is Small ribosomal subunit protein uS8c (rps8) from Nandina domestica (Heavenly bamboo).